The chain runs to 564 residues: Arrestin domain-containing protein E (564 aa).

Over residues 74 to 146 the composition is skewed to low complexity; sequence SQQPQSSQPS…NTSNGFSPPN (73 aa). Disordered regions lie at residues 74 to 150 and 245 to 286; these read SQQP…LNKN and ASQP…SFPS. Residues 250–259 show a composition bias toward pro residues; it reads PQQPQQPQPQ. Over residues 260–269 the composition is skewed to low complexity; that stretch reads QPQQQQFQQQ. The segment covering 270-285 has biased composition (polar residues); sequence SYNNNNSTQSMLSSFP. The region spanning 348–413 is the LIM zinc-binding domain; the sequence is DKCAACDALL…PMCFESTTGL (66 aa).

The sequence is that of Arrestin domain-containing protein E (adcE) from Dictyostelium discoideum (Social amoeba).